A 532-amino-acid polypeptide reads, in one-letter code: Probable C4-dicarboxylate sensor kinase (532 aa).

Topologically, residues M1–K12 are cytoplasmic. Residues I13–L33 traverse the membrane as a helical segment. Topologically, residues G34 to Q175 are extracellular. Residues P176 to A196 traverse the membrane as a helical segment. Residues S197–G532 are Cytoplasmic-facing. The 64-residue stretch at V216 to L279 folds into the PAS domain. Residues S315 to R531 enclose the Histidine kinase domain. H339 is modified (phosphohistidine; by autocatalysis).

It is found in the cell membrane. It catalyses the reaction ATP + protein L-histidine = ADP + protein N-phospho-L-histidine.. Functionally, member of the two-component regulatory system DctS/DctR. Probably activates DctR by phosphorylation. Essential for expression of dctP. In Halalkalibacterium halodurans (strain ATCC BAA-125 / DSM 18197 / FERM 7344 / JCM 9153 / C-125) (Bacillus halodurans), this protein is Probable C4-dicarboxylate sensor kinase (dctS).